A 186-amino-acid polypeptide reads, in one-letter code: Peptidyl-tRNA hydrolase (186 aa).

Tyr13 contacts tRNA. Catalysis depends on His18, which acts as the Proton acceptor. TRNA is bound by residues Tyr59, Asn61, and Asn107.

Belongs to the PTH family. As to quaternary structure, monomer.

It is found in the cytoplasm. The enzyme catalyses an N-acyl-L-alpha-aminoacyl-tRNA + H2O = an N-acyl-L-amino acid + a tRNA + H(+). In terms of biological role, hydrolyzes ribosome-free peptidyl-tRNAs (with 1 or more amino acids incorporated), which drop off the ribosome during protein synthesis, or as a result of ribosome stalling. Its function is as follows. Catalyzes the release of premature peptidyl moieties from peptidyl-tRNA molecules trapped in stalled 50S ribosomal subunits, and thus maintains levels of free tRNAs and 50S ribosomes. This chain is Peptidyl-tRNA hydrolase, found in Thermotoga maritima (strain ATCC 43589 / DSM 3109 / JCM 10099 / NBRC 100826 / MSB8).